Reading from the N-terminus, the 366-residue chain is Ribosomal RNA large subunit methyltransferase M (366 aa).

S-adenosyl-L-methionine-binding positions include S188, 221–224 (CPGG), D240, D260, and D277. K306 (proton acceptor) is an active-site residue.

The protein belongs to the class I-like SAM-binding methyltransferase superfamily. RNA methyltransferase RlmE family. RlmM subfamily. As to quaternary structure, monomer.

The protein resides in the cytoplasm. It carries out the reaction cytidine(2498) in 23S rRNA + S-adenosyl-L-methionine = 2'-O-methylcytidine(2498) in 23S rRNA + S-adenosyl-L-homocysteine + H(+). Catalyzes the 2'-O-methylation at nucleotide C2498 in 23S rRNA. The chain is Ribosomal RNA large subunit methyltransferase M from Dickeya chrysanthemi (strain Ech1591) (Dickeya zeae (strain Ech1591)).